A 723-amino-acid chain; its full sequence is Catalase-peroxidase (723 aa).

The segment at residues 89-212 (WHSAGTYRTG…LAAVQMGLIY (124 aa)) is a cross-link (tryptophyl-tyrosyl-methioninium (Trp-Tyr) (with M-238)). The active-site Proton acceptor is the histidine 90. A cross-link (tryptophyl-tyrosyl-methioninium (Tyr-Met) (with W-89)) is located at residues 212 to 238 (YVNPEGPNGDPDPFAAAVDIRETFARM). Histidine 253 lines the heme b pocket.

It belongs to the peroxidase family. Peroxidase/catalase subfamily. As to quaternary structure, homodimer or homotetramer. It depends on heme b as a cofactor. In terms of processing, formation of the three residue Trp-Tyr-Met cross-link is important for the catalase, but not the peroxidase activity of the enzyme.

It catalyses the reaction H2O2 + AH2 = A + 2 H2O. It carries out the reaction 2 H2O2 = O2 + 2 H2O. Functionally, bifunctional enzyme with both catalase and broad-spectrum peroxidase activity. The protein is Catalase-peroxidase of Shewanella baltica (strain OS185).